A 427-amino-acid chain; its full sequence is Peptidase B (427 aa).

Residues Lys-195 and Asp-200 each coordinate Mn(2+). Residue Lys-207 is part of the active site. The Mn(2+) site is built by Asp-218, Asp-277, and Glu-279. Arg-281 is a catalytic residue.

Belongs to the peptidase M17 family. In terms of assembly, homohexamer. Mn(2+) is required as a cofactor.

Its subcellular location is the cytoplasm. It catalyses the reaction Release of an N-terminal amino acid, Xaa, from a peptide or arylamide. Xaa is preferably Glu or Asp but may be other amino acids, including Leu, Met, His, Cys and Gln.. Its function is as follows. Probably plays an important role in intracellular peptide degradation. This is Peptidase B from Salmonella arizonae (strain ATCC BAA-731 / CDC346-86 / RSK2980).